The sequence spans 106 residues: MSLASRRKVRIRLYGTNPTDVDQVAREIVDLAKKMGVQVRGPIPLPTRRLMVTVRRAPSGQGYHTFDHWEMRISKRLIDIEASERVLRRLMTIRVPDTVKIELQLI.

It belongs to the universal ribosomal protein uS10 family. In terms of assembly, part of the 30S ribosomal subunit.

Functionally, involved in the binding of tRNA to the ribosomes. This is Small ribosomal subunit protein uS10 from Pyrobaculum neutrophilum (strain DSM 2338 / JCM 9278 / NBRC 100436 / V24Sta) (Thermoproteus neutrophilus).